A 362-amino-acid chain; its full sequence is Heme A synthase (362 aa).

5 consecutive transmembrane segments (helical) span residues 11-31 (AAIR…VLVG), 102-122 (VIGM…AVSG), 128-148 (LWLI…MVAS), 159-179 (VRLA…VWTL), and 198-218 (AWAL…VAGL). Position 262 (His262) interacts with heme. 3 helical membrane passes run 264–286 (MTAY…AGAG), 297–317 (LAAI…VVPI), and 318–338 (SLAL…VLQA). Position 323 (His323) interacts with heme.

It belongs to the COX15/CtaA family. Type 2 subfamily. As to quaternary structure, interacts with CtaB. Heme b is required as a cofactor.

The protein resides in the cell membrane. It catalyses the reaction Fe(II)-heme o + 2 A + H2O = Fe(II)-heme a + 2 AH2. It functions in the pathway porphyrin-containing compound metabolism; heme A biosynthesis; heme A from heme O: step 1/1. In terms of biological role, catalyzes the conversion of heme O to heme A by two successive hydroxylations of the methyl group at C8. The first hydroxylation forms heme I, the second hydroxylation results in an unstable dihydroxymethyl group, which spontaneously dehydrates, resulting in the formyl group of heme A. This chain is Heme A synthase, found in Bradyrhizobium sp. (strain ORS 278).